Consider the following 524-residue polypeptide: Glutamyl-tRNA(Gln) amidotransferase subunit A, mitochondrial (524 aa).

Catalysis depends on Lys-76, which acts as the Charge relay system. The disordered stretch occupies residues 146–168 (KQYRGKGSPDSSQEDQEPQWLVA). The active-site Charge relay system is Ser-171. Ser-195 acts as the Acyl-ester intermediate in catalysis.

The protein belongs to the amidase family. GatA subfamily. As to quaternary structure, subunit of the heterotrimeric GatCAB amidotransferase (AdT) complex, composed of A (QRSL1), B (GATB) and C (GATC) subunits.

It is found in the mitochondrion. The enzyme catalyses L-glutamyl-tRNA(Gln) + L-glutamine + ATP + H2O = L-glutaminyl-tRNA(Gln) + L-glutamate + ADP + phosphate + H(+). Allows the formation of correctly charged Gln-tRNA(Gln) through the transamidation of misacylated Glu-tRNA(Gln) in the mitochondria. The reaction takes place in the presence of glutamine and ATP through an activated gamma-phospho-Glu-tRNA(Gln). This chain is Glutamyl-tRNA(Gln) amidotransferase subunit A, mitochondrial, found in Ornithorhynchus anatinus (Duckbill platypus).